Reading from the N-terminus, the 208-residue chain is NADH-ubiquinone oxidoreductase chain 4 (208 aa).

6 helical membrane-spanning segments follow: residues 23–43 (VWINVTSYSFVINMIALVTLW), 60–80 (SLSSPLTMLTIWLLPLMLLAS), 93–113 (KMYISLLITLQVLLIMTFSAN), 114–134 (ELIMFYILFEATLIPTLIIIT), 147–167 (LYFLFYTLIGSIPLLIALISI), and 188–208 (PTWSSHILWLACIMAFMIKMP).

The protein belongs to the complex I subunit 4 family. Core subunit of respiratory chain NADH dehydrogenase (Complex I) which is composed of 45 different subunits.

Its subcellular location is the mitochondrion inner membrane. The catalysed reaction is a ubiquinone + NADH + 5 H(+)(in) = a ubiquinol + NAD(+) + 4 H(+)(out). Functionally, core subunit of the mitochondrial membrane respiratory chain NADH dehydrogenase (Complex I) which catalyzes electron transfer from NADH through the respiratory chain, using ubiquinone as an electron acceptor. Essential for the catalytic activity and assembly of complex I. This chain is NADH-ubiquinone oxidoreductase chain 4 (MT-ND4), found in Phodopus sungorus (Striped hairy-footed hamster).